We begin with the raw amino-acid sequence, 195 residues long: Protein Fer3 (195 aa).

Disordered regions lie at residues 1–24 (MQHP…LWGQ) and 56–82 (PLVP…RRRV). Over residues 63–75 (STNGRANGSSSSS) the composition is skewed to low complexity. Positions 86–138 (AQRRAANIRERRRMFNLNEAFDKLRRKVPTFAYEKRLSRIETLRLAITYIGFM) constitute a bHLH domain. Residues 145–175 (TPSNSHKSRSDVYGSMNGHHQAPPPAIHPHH) are disordered.

It localises to the nucleus. Functionally, transcription factor that binds to the E-box and functions as inhibitor of transcription. DNA binding requires dimerization with an E protein. Inhibits transcription activation by ASCL1/MASH1 by sequestering E proteins. The sequence is that of Protein Fer3 (fer3) from Drosophila melanogaster (Fruit fly).